The following is a 154-amino-acid chain: SsrA-binding protein (154 aa).

Residues 134-154 (QREDLKRRAEDRDTQRELARF) form a disordered region.

The protein belongs to the SmpB family.

The protein resides in the cytoplasm. In terms of biological role, required for rescue of stalled ribosomes mediated by trans-translation. Binds to transfer-messenger RNA (tmRNA), required for stable association of tmRNA with ribosomes. tmRNA and SmpB together mimic tRNA shape, replacing the anticodon stem-loop with SmpB. tmRNA is encoded by the ssrA gene; the 2 termini fold to resemble tRNA(Ala) and it encodes a 'tag peptide', a short internal open reading frame. During trans-translation Ala-aminoacylated tmRNA acts like a tRNA, entering the A-site of stalled ribosomes, displacing the stalled mRNA. The ribosome then switches to translate the ORF on the tmRNA; the nascent peptide is terminated with the 'tag peptide' encoded by the tmRNA and targeted for degradation. The ribosome is freed to recommence translation, which seems to be the essential function of trans-translation. The chain is SsrA-binding protein from Nitratidesulfovibrio vulgaris (strain ATCC 29579 / DSM 644 / CCUG 34227 / NCIMB 8303 / VKM B-1760 / Hildenborough) (Desulfovibrio vulgaris).